Here is a 348-residue protein sequence, read N- to C-terminus: Putative [LysW]-L-2-aminoadipate/[LysW]-L-glutamate phosphate reductase (348 aa).

9–12 (SGYV) contributes to the NADP(+) binding site. Residue C149 is part of the active site. N315 is a binding site for NADP(+).

The protein belongs to the NAGSA dehydrogenase family. Type 1 subfamily. LysY sub-subfamily.

The protein localises to the cytoplasm. It carries out the reaction [amino-group carrier protein]-C-terminal-N-(1-carboxy-5-oxopentan-1-yl)-L-glutamine + phosphate + NADP(+) = [amino-group carrier protein]-C-terminal-N-(1-carboxy-5-phosphooxy-5-oxopentan-1-yl)-L-glutamine + NADPH + H(+). The enzyme catalyses [amino-group carrier protein]-C-terminal-gamma-(L-glutamyl-5-semialdehyde)-L-glutamate + phosphate + NADP(+) = [amino-group carrier protein]-C-terminal-gamma-(5-phospho-L-glutamyl)-L-glutamate + NADPH + H(+). Its pathway is amino-acid biosynthesis; L-lysine biosynthesis via AAA pathway; L-lysine from L-alpha-aminoadipate (Thermus route): step 3/5. It functions in the pathway amino-acid biosynthesis; L-arginine biosynthesis. Its function is as follows. Involved in both the arginine and lysine biosynthetic pathways. The protein is Putative [LysW]-L-2-aminoadipate/[LysW]-L-glutamate phosphate reductase of Cenarchaeum symbiosum (strain A).